We begin with the raw amino-acid sequence, 439 residues long: Xaa-Pro dipeptidase (439 aa).

Mn(2+) is bound by residues Asp-244, Asp-255, His-335, Glu-380, and Glu-418.

The protein belongs to the peptidase M24B family. Bacterial-type prolidase subfamily. It depends on Mn(2+) as a cofactor.

It catalyses the reaction Xaa-L-Pro dipeptide + H2O = an L-alpha-amino acid + L-proline. In terms of biological role, splits dipeptides with a prolyl residue in the C-terminal position. This Shewanella frigidimarina (strain NCIMB 400) protein is Xaa-Pro dipeptidase.